The sequence spans 451 residues: Phosphoglucosamine mutase (451 aa).

Serine 102 functions as the Phosphoserine intermediate in the catalytic mechanism. 4 residues coordinate Mg(2+): serine 102, aspartate 243, aspartate 245, and aspartate 247. The residue at position 102 (serine 102) is a Phosphoserine.

The protein belongs to the phosphohexose mutase family. Mg(2+) is required as a cofactor. Activated by phosphorylation.

The catalysed reaction is alpha-D-glucosamine 1-phosphate = D-glucosamine 6-phosphate. In terms of biological role, catalyzes the conversion of glucosamine-6-phosphate to glucosamine-1-phosphate. The polypeptide is Phosphoglucosamine mutase (Salinispora arenicola (strain CNS-205)).